Here is a 211-residue protein sequence, read N- to C-terminus: FMN-dependent NADH:quinone oxidoreductase 2 (211 aa).

FMN-binding positions include Ser-10 and 17–19 (SRS).

It belongs to the azoreductase type 1 family. Homodimer. FMN serves as cofactor.

The catalysed reaction is 2 a quinone + NADH + H(+) = 2 a 1,4-benzosemiquinone + NAD(+). The enzyme catalyses N,N-dimethyl-1,4-phenylenediamine + anthranilate + 2 NAD(+) = 2-(4-dimethylaminophenyl)diazenylbenzoate + 2 NADH + 2 H(+). Its function is as follows. Quinone reductase that provides resistance to thiol-specific stress caused by electrophilic quinones. Functionally, also exhibits azoreductase activity. Catalyzes the reductive cleavage of the azo bond in aromatic azo compounds to the corresponding amines. This chain is FMN-dependent NADH:quinone oxidoreductase 2, found in Listeria monocytogenes serovar 1/2a (strain ATCC BAA-679 / EGD-e).